Here is a 539-residue protein sequence, read N- to C-terminus: Protein mushroom body miniature (539 aa).

Residues Met1 to Asn11 are compositionally biased toward polar residues. The tract at residues Met1–Lys345 is disordered. Residues Lys67–Gln79 are compositionally biased toward basic and acidic residues. Over residues Pro80–Arg89 the composition is skewed to basic residues. Over residues Gly90–Arg101 the composition is skewed to gly residues. The segment covering Ile199–Lys208 has biased composition (basic and acidic residues). The span at Val268 to Asp289 shows a compositional bias: low complexity. Phosphoserine occurs at positions 288 and 290. Residues Thr292 and Thr327 each carry the phosphothreonine modification. Residues Thr327–Glu336 are compositionally biased toward acidic residues. Ser332 is subject to Phosphoserine. Thr333 carries the post-translational modification Phosphothreonine. 2 CCHC-type zinc fingers span residues Cys354–Cys367 and Cys371–Asn386. Positions Val421–Pro513 are disordered. Residues Lys428–Arg447 are compositionally biased toward basic residues. Residues Asp456 to Ser480 are compositionally biased toward acidic residues.

Post-translationally, may be phosphorylated in vivo by CkIIalpha. mbm and CkIIalpha colocalize to the nucleolus and mbm is phosphorylated in vitro by CkIIalpha. In terms of tissue distribution, shows widespread expression in third instar larval brain with no apparent difference between males and females (at protein level). Detected at low levels in the mushroom body neuropil and is also expressed in many cells of the brain outside the mushroom body (at protein level). Not detected in third instar larval brain cells in anaphase (at protein level).

It is found in the nucleus. The protein resides in the nucleolus. Its subcellular location is the cytoplasm. Its function is as follows. Required for small ribosomal subunit biogenesis in neuroblasts. Plays a role in mushroom body development. This is Protein mushroom body miniature from Drosophila melanogaster (Fruit fly).